A 578-amino-acid polypeptide reads, in one-letter code: Adenine deaminase (578 aa).

The protein belongs to the metallo-dependent hydrolases superfamily. Adenine deaminase family. It depends on Mn(2+) as a cofactor.

The enzyme catalyses adenine + H2O + H(+) = hypoxanthine + NH4(+). This chain is Adenine deaminase, found in Ligilactobacillus salivarius (strain UCC118) (Lactobacillus salivarius).